The sequence spans 369 residues: tRNA(Met) cytidine acetate ligase (369 aa).

Residues 7 to 20 (VAEFNPFHNGHKYL), Gly-96, Asn-152, and Arg-175 each bind ATP.

Belongs to the TmcAL family.

It localises to the cytoplasm. The enzyme catalyses cytidine(34) in elongator tRNA(Met) + acetate + ATP = N(4)-acetylcytidine(34) in elongator tRNA(Met) + AMP + diphosphate. In terms of biological role, catalyzes the formation of N(4)-acetylcytidine (ac(4)C) at the wobble position of elongator tRNA(Met), using acetate and ATP as substrates. First activates an acetate ion to form acetyladenylate (Ac-AMP) and then transfers the acetyl group to tRNA to form ac(4)C34. This chain is tRNA(Met) cytidine acetate ligase, found in Streptococcus agalactiae serotype III (strain NEM316).